Here is a 154-residue protein sequence, read N- to C-terminus: Deoxyuridine 5'-triphosphate nucleotidohydrolase (154 aa).

Substrate contacts are provided by residues 64 to 66, Asn77, 81 to 83, and Lys91; these read RSG and TID.

This sequence belongs to the dUTPase family. In terms of assembly, homotrimer. The cofactor is Mg(2+).

The catalysed reaction is dUTP + H2O = dUMP + diphosphate + H(+). Its pathway is pyrimidine metabolism; dUMP biosynthesis; dUMP from dCTP (dUTP route): step 2/2. Functionally, this enzyme is involved in nucleotide metabolism: it produces dUMP, the immediate precursor of thymidine nucleotides and it decreases the intracellular concentration of dUTP so that uracil cannot be incorporated into DNA. This is Deoxyuridine 5'-triphosphate nucleotidohydrolase from Mycobacterium avium (strain 104).